A 494-amino-acid chain; its full sequence is Zinc finger and SCAN domain-containing protein 30 (494 aa).

Residues 48-130 form the SCAN box domain; sequence RQKFRQFSYS…TMLEELEKEL (83 aa). Residue Lys-197 forms a Glycyl lysine isopeptide (Lys-Gly) (interchain with G-Cter in SUMO2) linkage. C2H2-type zinc fingers lie at residues 301 to 323, 329 to 351, 357 to 379, 385 to 407, 413 to 435, 441 to 463, and 469 to 491; these read YECFDCGKAFCQSSKLIRHQRIH, YACKECGKAFSLSSDLVRHQRIH, YECCECGKAFRGSSELIRHRRIH, YECGECGKAFSRSSALIQHKKIH, YECIACGKAFGRSSILIEHQRIH, YECNECGKSFNQSSALTQHQRIH, and YECSECRKTFRHRSGLMQHQRTH.

This sequence belongs to the krueppel C2H2-type zinc-finger protein family.

It is found in the nucleus. May be involved in transcriptional regulation. The chain is Zinc finger and SCAN domain-containing protein 30 (ZSCAN30) from Homo sapiens (Human).